The primary structure comprises 65 residues: Large ribosomal subunit protein bL35 (65 aa).

The span at 1–15 shows a compositional bias: basic residues; the sequence is MPKLKTRKAAAKRFR. The interval 1 to 28 is disordered; it reads MPKLKTRKAAAKRFRQTGTGKFTRRKAN.

It belongs to the bacterial ribosomal protein bL35 family.

The polypeptide is Large ribosomal subunit protein bL35 (Cyanothece sp. (strain PCC 7425 / ATCC 29141)).